Consider the following 401-residue polypeptide: Phosphoglycerate kinase (401 aa).

Residues Asp26–Asn28, Arg41, His64–Arg67, Arg123, and Arg156 each bind substrate. ATP is bound by residues Lys207, Gly298, Glu329, and Gly355–Ser358.

The protein belongs to the phosphoglycerate kinase family. Monomer.

Its subcellular location is the cytoplasm. The catalysed reaction is (2R)-3-phosphoglycerate + ATP = (2R)-3-phospho-glyceroyl phosphate + ADP. It functions in the pathway carbohydrate degradation; glycolysis; pyruvate from D-glyceraldehyde 3-phosphate: step 2/5. This chain is Phosphoglycerate kinase, found in Bdellovibrio bacteriovorus (strain ATCC 15356 / DSM 50701 / NCIMB 9529 / HD100).